Consider the following 331-residue polypeptide: Olfactory receptor 10S1 (331 aa).

Residues 1–38 (MTSRSVCEKMTMTTENPNQTVVSHFFLEGLRYTAKHSS) are Extracellular-facing. Residue asparagine 18 is glycosylated (N-linked (GlcNAc...) asparagine). A helical transmembrane segment spans residues 39-59 (LFFLLFLLIYSITVAGNLLIL). Topologically, residues 60 to 67 (LTVGSDSH) are cytoplasmic. A helical transmembrane segment spans residues 68 to 88 (LSLPMYHFLGHLSFLDACLST). Topologically, residues 89 to 113 (VTVPKVMAGLLTLDGKVISFEGCAV) are extracellular. Cysteines 111 and 203 form a disulfide. Residues 114–134 (QLYCFHFLASTECFLYTVMAY) traverse the membrane as a helical segment. The Cytoplasmic portion of the chain corresponds to 135-153 (DRYLAICQPLHYPVAMNRR). A helical membrane pass occupies residues 154–174 (MCAEMAGITWAIGATHAAIHT). Topologically, residues 175–211 (SLTFRLLYCGPCHIAYFFCDIPPVLKLACTDTTINEL) are extracellular. A helical membrane pass occupies residues 212–231 (VMLASIGIVAAGCLILIVIS). Topologically, residues 232–251 (YIFIVAAVLRIRTAQGRQRA) are cytoplasmic. Residues 252-272 (FSPCTAQLTGVLLYYVPPVCI) traverse the membrane as a helical segment. At 273–283 (YLQPRSSEAGA) the chain is on the extracellular side. The chain crosses the membrane as a helical span at residues 284-304 (GAPAVFYTIVTPMLNPFIYTL). Residues 305–331 (RNKEVKHALQRLLCSSFRESTAGSPPP) are Cytoplasmic-facing.

Belongs to the G-protein coupled receptor 1 family.

It is found in the cell membrane. Odorant receptor. The sequence is that of Olfactory receptor 10S1 (OR10S1) from Homo sapiens (Human).